A 488-amino-acid chain; its full sequence is GTPase Der (488 aa).

Residues 3 to 166 enclose the EngA-type G 1 domain; that stretch reads PVVALVGRPN…YALAPYAEAL (164 aa). Residues 9-16, 56-60, and 118-121 contribute to the GTP site; these read GRPNVGKS, DTGGI, and NKVD. The interval 168 to 191 is disordered; the sequence is LNRDGDEDEDEEEREYSEEEAEAE. Over residues 172–189 the composition is skewed to acidic residues; the sequence is GDEDEDEEEREYSEEEAE. The EngA-type G 2 domain maps to 200-373; the sequence is IKMAIIGKPN…SVQEAYDSAT (174 aa). GTP-binding positions include 206 to 213, 253 to 257, and 318 to 321; these read GKPNVGKS, DTAGV, and NKWD. Residues 374-458 form the KH-like domain; it reads RRVSTSMLTR…PIQIRFQDSA (85 aa).

The protein belongs to the TRAFAC class TrmE-Era-EngA-EngB-Septin-like GTPase superfamily. EngA (Der) GTPase family. Associates with the 50S ribosomal subunit.

GTPase that plays an essential role in the late steps of ribosome biogenesis. This chain is GTPase Der, found in Shewanella sediminis (strain HAW-EB3).